A 316-amino-acid polypeptide reads, in one-letter code: Probable cell division protein WhiA (316 aa).

The H-T-H motif DNA-binding region spans S274–N308.

It belongs to the WhiA family.

In terms of biological role, involved in cell division and chromosome segregation. This chain is Probable cell division protein WhiA, found in Macrococcus caseolyticus (strain JCSC5402) (Macrococcoides caseolyticum).